Here is a 444-residue protein sequence, read N- to C-terminus: Acyl-CoA (8-3)-desaturase (444 aa).

Met1 carries the post-translational modification N-acetylmethionine. Residues 1-121 lie on the Cytoplasmic side of the membrane; sequence MAPDPVAAET…FRELRATVER (121 aa). A Cytochrome b5 heme-binding domain is found at 17-94; the sequence is PRYFTWDEVA…MNSLLIGELS (78 aa). Residues 122-142 form a helical membrane-spanning segment; sequence MGLMKANHVFFLLYLLHILLL. At 143-145 the chain is on the lumenal side; sequence DGA. Residues 146–170 form a helical membrane-spanning segment; it reads AWLTLWVFGTSFLPFLLCAVLLSAV. At 171-267 the chain is on the cytoplasmic side; the sequence is QAQAGWLQHD…PYNHQHKYFF (97 aa). The Histidine box-1 signature appears at 179-183; sequence HDFGH. Positions 216–220 match the Histidine box-2 motif; sequence HFQHH. The helical transmembrane segment at 268-288 threads the bilayer; it reads LIGPPALLPLYFQWYIFYFVI. The Lumenal segment spans residues 289–305; the sequence is QRKKWVDLAWMITFYVR. A helical membrane pass occupies residues 306-326; that stretch reads FFLTYVPLLGLKAFLGLFFIV. Residues 327–444 are Cytoplasmic-facing; the sequence is RFLESNWFVW…QLWLDAYLHQ (118 aa). The Histidine box-3 motif lies at 382–386; that stretch reads QIEHH.

It belongs to the fatty acid desaturase type 1 family. As to expression, widely expressed, with highest levels in liver, brain, adrenal gland and heart. Highly expressed in fetal liver and brain.

Its subcellular location is the endoplasmic reticulum membrane. The protein localises to the mitochondrion. The enzyme catalyses (8Z,11Z,14Z)-eicosatrienoyl-CoA + 2 Fe(II)-[cytochrome b5] + O2 + 2 H(+) = (5Z,8Z,11Z,14Z)-eicosatetraenoyl-CoA + 2 Fe(III)-[cytochrome b5] + 2 H2O. The catalysed reaction is (8Z,11Z,14Z,17Z)-eicosatetraenoyl-CoA + 2 Fe(II)-[cytochrome b5] + O2 + 2 H(+) = (5Z,8Z,11Z,14Z,17Z)-eicosapentaenoyl-CoA + 2 Fe(III)-[cytochrome b5] + 2 H2O. It catalyses the reaction (11E)-octadecenoyl-CoA + 2 Fe(II)-[cytochrome b5] + O2 + 2 H(+) = (5Z,11E)-octadecadienoyl-CoA + 2 Fe(III)-[cytochrome b5] + 2 H2O. The protein operates within lipid metabolism; polyunsaturated fatty acid biosynthesis. Functionally, acts as a front-end fatty acyl-coenzyme A (CoA) desaturase that introduces a cis double bond at carbon 5 located between a preexisting double bond and the carboxyl end of the fatty acyl chain. Involved in biosynthesis of highly unsaturated fatty acids (HUFA) from the essential polyunsaturated fatty acids (PUFA) linoleic acid (LA) (18:2n-6) and alpha-linolenic acid (ALA) (18:3n-3) precursors. Specifically, desaturates dihomo-gamma-linoleoate (DGLA) (20:3n-6) and eicosatetraenoate (ETA) (20:4n-3) to generate arachidonate (AA) (20:4n-6) and eicosapentaenoate (EPA) (20:5n-3), respectively. As a rate limiting enzyme for DGLA (20:3n-6) and AA (20:4n-6)-derived eicosanoid biosynthesis, controls the metabolism of inflammatory lipids like prostaglandin E2, critical for efficient acute inflammatory response and maintenance of epithelium homeostasis. Contributes to membrane phospholipid biosynthesis by providing AA (20:4n-6) as a major acyl chain esterified into phospholipids. In particular, regulates phosphatidylinositol-4,5-bisphosphate levels, modulating inflammatory cytokine production in T-cells. Also desaturates (11E)-octadecenoate (trans-vaccenoate)(18:1n-9), a metabolite in the biohydrogenation pathway of LA (18:2n-6). In terms of biological role, does not exhibit any catalytic activity toward 20:3n-6, but it may enhance FADS2 activity. This Homo sapiens (Human) protein is Acyl-CoA (8-3)-desaturase.